Reading from the N-terminus, the 175-residue chain is ATP-dependent protease subunit HslV (175 aa).

The active site involves Thr-2. Positions 158, 161, and 164 each coordinate Na(+).

It belongs to the peptidase T1B family. HslV subfamily. In terms of assembly, a double ring-shaped homohexamer of HslV is capped on each side by a ring-shaped HslU homohexamer. The assembly of the HslU/HslV complex is dependent on binding of ATP.

The protein resides in the cytoplasm. It catalyses the reaction ATP-dependent cleavage of peptide bonds with broad specificity.. Allosterically activated by HslU binding. Protease subunit of a proteasome-like degradation complex believed to be a general protein degrading machinery. This Histophilus somni (strain 129Pt) (Haemophilus somnus) protein is ATP-dependent protease subunit HslV.